Reading from the N-terminus, the 172-residue chain is Envelope protein UL45 (172 aa).

The Intravirion portion of the chain corresponds to 1–27 (MPLRASEHAYRPLGPGTPPMRARLPAA). Residues 28-48 (AWVGVGTIIGGVVIIAALVLV) traverse the membrane as a helical; Signal-anchor for type II membrane protein segment. Topologically, residues 49 to 172 (PSRASWALSP…TSTRNALGLP (124 aa)) are virion surface.

The protein belongs to the herpesviridae HHV-1 UL45 family.

Its subcellular location is the virion membrane. Functionally, important virulence factor of HSV neurotropism. Seems to be required for glycoprotein B-induced fusion. Dispensable for growth in vitro. This Human herpesvirus 1 (strain KOS) (HHV-1) protein is Envelope protein UL45.